A 108-amino-acid chain; its full sequence is Small ribosomal subunit protein bS18c (108 aa).

Basic residues-rich tracts occupy residues 1 to 19 (MDKS…RRRL) and 97 to 108 (RARKKKIGLLLN). Disordered regions lie at residues 1 to 23 (MDKS…PPIG) and 83 to 108 (QFER…LLLN).

The protein belongs to the bacterial ribosomal protein bS18 family. In terms of assembly, part of the 30S ribosomal subunit.

The protein resides in the plastid. The protein localises to the chloroplast. The chain is Small ribosomal subunit protein bS18c from Illicium oligandrum (Star anise).